Reading from the N-terminus, the 4069-residue chain is MASRDSNHAGESFLGSDGDEEATRELETEEESEGEEDETAAESEEEPDSRLSDQDEEGKIKQEYIISDPSFSMVTVQREDSGITWETNSSRSSTPWASEESQTSGVCSREGSTVNSPPGNVSFIVDEVKKVRKRTHKSKHGSPSLRRKGNRKRNSFESQDVPTNKKGSPLTSASQVLTTEKEKSYTGIYDKARKKKTTSNTPPITGAIYKEHKPLVLRPVYIGTVQYKIKMFNSVKEELIPLQFYGTLPKGYVIKEIHYRKGKDASISLEPDLDNSGSNTVSKTRKLVAQSIEDKVKEVFPPWRGALSKGSESLTLMFSHEDQKKIYADSPLNATSALEHTVPSYSSSGRAEQGIQLRHSQSVPQQPEDEAKPHEVEPPSVTPDTPATMFLRTTKEECELASPGTAASENDSSVSPSFANEVKKEDVYSAHHSISLEAASPGLAASTQDGLDPDQEQPDLTSIERAEPVSAKLTPTHPSVKGEKEENMLEPSISLSEPLMLEEPEKEEIETSLPIAITPEPEDSNLVEEEIVELDYPESPLVSEKPFPPHMSPEVEHKEEELILPLLAASSPEHVALSEEEREEIASVSTGSAFVSEYSVPQDLNHELQEQEGEPVPPSNVEAIAEHAVLSEEENEEFEAYSPAAAPTSESSLSPSTTEKTSENQSPLFSTVTPEYMVLSGDEASESGCYTPDSTSASEYSVPSLATKESLKKTIDRKSPLILKGVSEYMIPSEEKEDTGSFTPAVAPASEPSLSPSTTEKTSECQSPLPSTATSEHVVPSEGEDLGSERFTPDSKLISKYAAPLNATQESQKKIINEASQFKPKGISEHTVLSVDGKEVIGPSSPDLVVASEHSFPPHTTEMTSECQAPPLSATPSEYVVLSDEEAVELERYTPSSTSASEFSVPPYATPEAQEEEIVHRSLNLKGASSPMNLSEEDQEDIGPFSPDSAFVSEFSFPPYATQEAEKREFECDSPICLTSPSEHTILSDEDTEEAELFSPDSASQVSIPPFRISETEKNELEPDSLLTAVSASGYSCFSEADEEDIGSTAATPVSEQFSSSQKQKAETFPLMSPLEDLSLPPSTDKSEKAEIKPEIPTTSTSVSEYLILAQKQKTQAYLEPESEDLIPSHLTSEVEKGEREASSSVAAIPAALPAQSSIVKEETKPASPHSVLPDSVPAIKKEQEPTAALTLKAADEQMALSKVRKEEIVPDSQEATAHVSQDQKMEPQPPNVPESEMKYSVLPDMVDEPKKGVKPKLVLNVTSELEQRKLSKNEPEVIKPYSPLKETSLSGPEALSAVKMEMKHDSKITTTPIVLHSASSGVEKQVEHGPPALAFSALSEEIKKEIEPSSSTTTASVTKLDSNLTRAVKEEIPTDSSLITPVDRPVLTKVGKGELGSGLPPLVTSADEHSVLAEEDKVAIKGASPIETSSKHLAWSEAEKEIKFDSLPSVSSIAEHSVLSEVEAKEVKAGLPVIKTSSSQHSDKSEEARVEDKQDLLFSTVCDSERLVSSQKKSLMSTSEVLEPEHELPLSLWGEIKKKETELPSSQNVSPASKHIIPKGKDEETASSSPELENLASGLAPTLLLLSDDKNKPAVEVSSTAQGDFPSEKQDVALAELSLEPEKKDKPHQPLELPNAGSEFSSDLGRQSGSIGTKQAKSPITETEDSVLEKGPAELRSREGKEENRELCASSTMPAISELSSLLREESQNEEIKPFSPKIISLESKEPPASVAEGGNPEEFQPFTFSLKGLSEEVSHPADFKKGGNQEIGPLPPTGNLKAQVMGDILDKLSEETGHPNSSQVLQSITEPSKIAPSDLLVEQKKTEKALHSDQTVKLPDVSTSSEDKQDLGIKQFSLMRENLPLEQSKSFMTTKPADVKETKMEEFFISPKDENWMLGKPENVASQHEQRIAGSVQLDSSSSNELRPGQLKAAVSSKDHTCEVRKQVLPHSAEESHLSSQEAVSALDTSSGNTETLSSKSYSSEEVKLAEEPKSLVLAGNVERNIAEGKEIHSLMESESLLLEKANTELSWPSKEDSQEKIKLPPERFFQKPVSGLSVEQVKSETISSSVKTAHFPAEGVEPALGNEKEAHRSTPPFPEEKPLEESKMVQSKVIDDADEGKKPSPEVKIPTQRKPISSIHAREPQSPESPEVTQNPPTQPKVAKPDLPEEKGKKGISSFKSWMSSLFFGSSTPDNKVAEQEDLETQPSPSVEKAVTVIDPEGTIPTNFNVAEKPADHSLSEVKLKTADEPRGTLVKSGDGQNVKEKSMILSNVEDLQQPKFISEVSREDYGKKEISGDSEEMNINSVVTSADGENLEIQSYSLIGEKLVMEEAKTIVPPHVTDSKRVQKPAIAPPSKWNISIFKEEPRSDQKQKSLLSFDVVDKVPQQPKSASSNFASKNITKESEKPESIILPVEESKGSLIDFSEDRLKKEMQNPTSLKISEEETKLRSVSPTEKKDNLENRSYTLAEKKVLAEKQNSVAPLELRDSNEIGKTQITLGSRSTELKESKADAMPQHFYQNEDYNERPKIIVGSEKEKGEEKENQVYVLSEGKKQQEHQPYSVNVAESMSRESDISLGHSLGETQSFSLVKATSVTEKSEAMLAEAHPEIREAKAVGTQPHPLEESKVLVEKTKTFLPVALSCRDEIENHSLSQEGNLVLEKSSRDMPDHSEEKEQFRESELSKGGSVDITKETVKQGFQEKAVGTQPRPLEESKVLVEKTKTFLPVVLSCHDEIENHSLSQEGNLVLEKSSRDMPDHSEEKEQFKESELWKGGSVDITKESMKEGFPSKESERTLARPFDETKSSETPPYLLSPVKPQTLASGASPEINAVKKKEMPRSELTPERHTVHTIQTSKDDTSDVPKQSVLVSKHHLEAAEDTRVKEPLSSAKSNYAQFISNTSASNADKMVSNKEMPKEPEDTYAKGEDFTVTSKPAGLSEDQKTAFSIISEGCEILNIHAPAFISSIDQEESEQMQDKLEYLEEKASFKTIPLPDDSETVACHKTLKSRLEDEKVTPLKENKQKETHKTKEEISTDSETDLSFIQPTIPSEEDYFEKYTLIDYNISPDPEKQKAPQKLNVEEKLSKEVTEETISFPVSSVESALEHEYDLVKLDESFYGPEKGHNILSHPETQSQNSADRNVSKDTKRDVDSKSPGMPLFEAEEGVLSRTQIFPTTIKVIDPEFLEEPPALAFLYKDLYEEAVGEKKKEEETASEGDSVNSEASFPSRNSDTDDGTGIYFEKYILKDDILHDTSLTQKDQGQGLEEKRVGKDDSYQPIAAEGEIWGKFGTICREKSLEEQKGVYGEGESVDHVETVGNVAMQKKAPITEDVRVATQKISYAVPFEDTHHVLERADEAGSHGNEVGNASPEVNLNVPVQVSFPEEEFASGATHVQETSLEEPKILVPPEPSEERLRNSPVQDEYEFTESLHNEVVPQDILSEELSSESTPEDVLSQGKESFEHISENEFASEAEQSTPAEQKELGSERKEEDQLSSEVVTEKAQKELKKSQIDTYCYTCKCPISATDKVFGTHKDHEVSTLDTAISAVKVQLAEFLENLQEKSLRIEAFVSEIESFFNTIEENCSKNEKRLEEQNEEMMKKVLAQYDEKAQSFEEVKKKKMEFLHEQMVHFLQSMDTAKDTLETIVREAEELDEAVFLTSFEEINERLLSAMESTASLEKMPAAFSLFEHYDDSSARSDQMLKQVAVPQPPRLEPQEPNSATSTTIAVYWSMNKEDVIDSFQVYCMEEPQDDQEVNELVEEYRLTVKESYCIFEDLEPDRCYQVWVMAVNFTGCSLPSERAIFRTAPSTPVIRAEDCTVCWNTATIRWRPTTPEATETYTLEYCRQHSPEGEGLRSFSGIKGLQLKVNLQPNDNYFFYVRAINAFGTSEQSEAALISTRGTRFLLLRETAHPALHISSSGTVISFGERRRLTEIPSVLGEELPSCGQHYWETTVTDCPAYRLGICSSSAVQAGALGQGETSWYMHCSEPQRYTFFYSGIVSDVHVTERPARVGILLDYNNQRLIFINAESEQLLFIIRHRFNEGVHPAFALEKPGKCTLHLGIEPPDSVRHK.

Disordered regions lie at residues 1 to 177 (MASR…SQVL), 341 to 387 (TVPS…DTPA), 442 to 525 (GLAA…EDSN), 538 to 558 (ESPL…VEHK), 597 to 705 (EYSV…VPSL), 732 to 793 (PSEE…RFTP), 844 to 872 (SSPD…APPL), 890 to 948 (LERY…FSPD), 979 to 1009 (TSPS…VSIP), 1041 to 1097 (ADEE…PEIP), 1160 to 1179 (VKEE…SVPA), 1205 to 1237 (RKEE…PESE), 1540 to 1575 (KETE…ELEN), 1594 to 1742 (PAVE…EEFQ), 1757 to 1809 (HPAD…ITEP), 1892 to 1988 (ENWM…VKLA), 2064 to 2175 (TISS…KKGI), 2187 to 2259 (FGSS…SGDG), 2385 to 2412 (PQQP…SIIL), 2425 to 2463 (SEDR…LENR), 2494 to 2527 (TQIT…NERP), 2653 to 2706 (QEGN…VGTQ), and 2750 to 2862 (SSRD…SDVP). Positions 27–47 (ETEEESEGEEDETAAESEEEP) are enriched in acidic residues. Residues 48-62 (DSRLSDQDEEGKIKQ) are compositionally biased toward basic and acidic residues. Residues 84–119 (TWETNSSRSSTPWASEESQTSGVCSREGSTVNSPPG) are compositionally biased toward polar residues. Residues 130–153 (KVRKRTHKSKHGSPSLRRKGNRKR) are compositionally biased toward basic residues. Position 155 is a phosphoserine (Ser155). Polar residues-rich tracts occupy residues 156 to 177 (FESQ…SQVL) and 341 to 350 (TVPSYSSSGR). The segment covering 489–499 (LEPSISLSEPL) has biased composition (low complexity). Acidic residues predominate over residues 500–510 (MLEEPEKEEIE). Ser631 carries the post-translational modification Phosphoserine. The span at 640–659 (AYSPAAAPTSESSLSPSTTE) shows a compositional bias: low complexity. Composition is skewed to polar residues over residues 664-673 (NQSPLFSTVT), 692-701 (PDSTSASEYS), and 752-775 (PSLS…TATS). Residues 1049 to 1063 (TAATPVSEQFSSSQK) are compositionally biased toward polar residues. The segment covering 1085–1094 (DKSEKAEIKP) has biased composition (basic and acidic residues). Residues 1214-1223 (QEATAHVSQD) show a composition bias toward polar residues. A compositionally biased stretch (basic and acidic residues) spans 1621–1630 (EPEKKDKPHQ). The segment covering 1639 to 1662 (SEFSSDLGRQSGSIGTKQAKSPIT) has biased composition (polar residues). 3 stretches are compositionally biased toward basic and acidic residues: residues 1668–1687 (VLEK…ENRE), 1704–1714 (LREESQNEEIK), and 1786–1795 (ILDKLSEETG). Residues 1796-1808 (HPNSSQVLQSITE) show a composition bias toward polar residues. Basic and acidic residues predominate over residues 1935-1955 (SKDHTCEVRKQVLPHSAEESH). Over residues 1956-1980 (LSSQEAVSALDTSSGNTETLSSKSY) the composition is skewed to polar residues. Basic and acidic residues predominate over residues 2085–2124 (NEKEAHRSTPPFPEEKPLEESKMVQSKVIDDADEGKKPSP). Positions 2145-2155 (SPESPEVTQNP) are enriched in polar residues. 2 stretches are compositionally biased toward basic and acidic residues: residues 2162–2172 (AKPDLPEEKGK) and 2232–2250 (KPAD…DEPR). The segment covering 2387-2399 (QPKSASSNFASKN) has biased composition (polar residues). At Ser2404 the chain carries Phosphoserine. The span at 2441-2461 (ISEEETKLRSVSPTEKKDNLE) shows a compositional bias: basic and acidic residues. 3 stretches are compositionally biased toward basic and acidic residues: residues 2661 to 2681 (KSSR…ESEL), 2750 to 2769 (SSRD…ESEL), and 2777 to 2804 (ITKE…ETKS). The residue at position 2813 (Ser2813) is a Phosphoserine. Residues 2830–2847 (AVKKKEMPRSELTPERHT) are compositionally biased toward basic and acidic residues. The stretch at 2964-2988 (SIDQEESEQMQDKLEYLEEKASFKT) forms a coiled coil. Residues 3015 to 3031 (PLKENKQKETHKTKEEI) are compositionally biased toward basic and acidic residues. 5 disordered regions span residues 3015–3037 (PLKE…DSET), 3119–3156 (EKGH…PGMP), 3204–3231 (KKKE…SDTD), 3386–3421 (SGAT…QDEY), and 3465–3495 (EFAS…SSEV). The tract at residues 3052-3365 (YFEKYTLIDY…GSHGNEVGNA (314 aa)) is required for RYR2 clustering. Positions 3128-3138 (PETQSQNSADR) are enriched in polar residues. The span at 3139–3150 (NVSKDTKRDVDS) shows a compositional bias: basic and acidic residues. Positions 3213–3227 (EGDSVNSEASFPSRN) are enriched in polar residues. Position 3228 is a phosphoserine (Ser3228). The segment covering 3477-3489 (EQKELGSERKEED) has biased composition (basic and acidic residues). An amphipathic helix H1 region spans residues 3517–3544 (KCPISATDKVFGTHKDHEVSTLDTAISA). Positions 3544-3653 (AVKVQLAEFL…REAEELDEAV (110 aa)) form a coiled coil. The B-box coiled-coil; BBC stretch occupies residues 3545–3672 (VKVQLAEFLE…ERLLSAMEST (128 aa)). An amphipathic helix H2 region spans residues 3631–3648 (SMDTAKDTLETIVREAEE). Fibronectin type-III domains lie at 3704-3805 (VPQP…TAPS) and 3806-3898 (TPVI…TRGT). Residues 3751–3767 (EVNELVEEYRLTVKESY) are amphipathic helix H3. The 186-residue stretch at 3880–4065 (NAFGTSEQSE…LHLGIEPPDS (186 aa)) folds into the B30.2/SPRY domain.

In terms of assembly, interacts with PRKAR2A. Interacts with ACTN2 and DTNBP1/dysbindin. Interacts with DES. Interacts with DMD/dystrophin. Interacts with the calcineurin catalytic subunit PPP3CA. Interacts with TTN. Interacts with CAPN3; this interaction, which results in CMYA5 proteolysis, may protect CAPN3 from autolysis. Interacts with FSD2. Identified in a complex composed of FSD2, CMYA5 and RYR2. Phosphorylated by PKA. As to expression, expressed in skeletal muscle; at a strong level and in heart.

The protein localises to the nucleus. The protein resides in the sarcoplasmic reticulum. Its subcellular location is the cytoplasm. It is found in the perinuclear region. It localises to the myofibril. The protein localises to the sarcomere. The protein resides in the m line. Functionally, may serve as an anchoring protein that mediates the subcellular compartmentation of protein kinase A (PKA) via binding to PRKAR2A. May function as a repressor of calcineurin-mediated transcriptional activity. May attenuate calcineurin ability to induce slow-fiber gene program in muscle and may negatively modulate skeletal muscle regeneration. Plays a role in the assembly of ryanodine receptor (RYR2) clusters in striated muscle. This is Cardiomyopathy-associated protein 5 (CMYA5) from Homo sapiens (Human).